Reading from the N-terminus, the 232-residue chain is Ubiquinone biosynthesis O-methyltransferase (232 aa).

S-adenosyl-L-methionine is bound by residues R36, G55, D76, and L120.

This sequence belongs to the methyltransferase superfamily. UbiG/COQ3 family.

It carries out the reaction a 3-demethylubiquinol + S-adenosyl-L-methionine = a ubiquinol + S-adenosyl-L-homocysteine + H(+). The catalysed reaction is a 3-(all-trans-polyprenyl)benzene-1,2-diol + S-adenosyl-L-methionine = a 2-methoxy-6-(all-trans-polyprenyl)phenol + S-adenosyl-L-homocysteine + H(+). Its pathway is cofactor biosynthesis; ubiquinone biosynthesis. O-methyltransferase that catalyzes the 2 O-methylation steps in the ubiquinone biosynthetic pathway. This chain is Ubiquinone biosynthesis O-methyltransferase, found in Pseudomonas putida (strain W619).